The primary structure comprises 207 residues: Small ribosomal subunit protein uS4 (207 aa).

The interval 31-54 (KCKLDTKPGQHGRTSGSRTSDYGN) is disordered. The span at 42-53 (GRTSGSRTSDYG) shows a compositional bias: polar residues. Residues 97–158 (SRLDNVVYRM…KAKKQARITE (62 aa)) form the S4 RNA-binding domain.

Belongs to the universal ribosomal protein uS4 family. In terms of assembly, part of the 30S ribosomal subunit. Contacts protein S5. The interaction surface between S4 and S5 is involved in control of translational fidelity.

One of the primary rRNA binding proteins, it binds directly to 16S rRNA where it nucleates assembly of the body of the 30S subunit. In terms of biological role, with S5 and S12 plays an important role in translational accuracy. The protein is Small ribosomal subunit protein uS4 of Polynucleobacter asymbioticus (strain DSM 18221 / CIP 109841 / QLW-P1DMWA-1) (Polynucleobacter necessarius subsp. asymbioticus).